The primary structure comprises 219 residues: Thiamine-phosphate synthase (219 aa).

Residues 44-48 (QFREK) and asparagine 79 each bind 4-amino-2-methyl-5-(diphosphooxymethyl)pyrimidine. Aspartate 80 and aspartate 99 together coordinate Mg(2+). Serine 117 is a binding site for 4-amino-2-methyl-5-(diphosphooxymethyl)pyrimidine. 143-145 (TST) provides a ligand contact to 2-[(2R,5Z)-2-carboxy-4-methylthiazol-5(2H)-ylidene]ethyl phosphate. 4-amino-2-methyl-5-(diphosphooxymethyl)pyrimidine is bound at residue lysine 146. 2-[(2R,5Z)-2-carboxy-4-methylthiazol-5(2H)-ylidene]ethyl phosphate is bound by residues glycine 175 and 195 to 196 (IS).

This sequence belongs to the thiamine-phosphate synthase family. Mg(2+) is required as a cofactor.

The catalysed reaction is 2-[(2R,5Z)-2-carboxy-4-methylthiazol-5(2H)-ylidene]ethyl phosphate + 4-amino-2-methyl-5-(diphosphooxymethyl)pyrimidine + 2 H(+) = thiamine phosphate + CO2 + diphosphate. It carries out the reaction 2-(2-carboxy-4-methylthiazol-5-yl)ethyl phosphate + 4-amino-2-methyl-5-(diphosphooxymethyl)pyrimidine + 2 H(+) = thiamine phosphate + CO2 + diphosphate. It catalyses the reaction 4-methyl-5-(2-phosphooxyethyl)-thiazole + 4-amino-2-methyl-5-(diphosphooxymethyl)pyrimidine + H(+) = thiamine phosphate + diphosphate. The protein operates within cofactor biosynthesis; thiamine diphosphate biosynthesis; thiamine phosphate from 4-amino-2-methyl-5-diphosphomethylpyrimidine and 4-methyl-5-(2-phosphoethyl)-thiazole: step 1/1. In terms of biological role, condenses 4-methyl-5-(beta-hydroxyethyl)thiazole monophosphate (THZ-P) and 2-methyl-4-amino-5-hydroxymethyl pyrimidine pyrophosphate (HMP-PP) to form thiamine monophosphate (TMP). In Bacillus cereus (strain AH820), this protein is Thiamine-phosphate synthase.